The sequence spans 129 residues: Large ribosomal subunit protein mL53 (129 aa).

A mitochondrion-targeting transit peptide spans 1 to 50; that stretch reads MREKLNLLAKLKSVVYKFDPLNPNTRSIRSFIPLTTCKRSRQLAPECSIS.

This sequence belongs to the mitochondrion-specific ribosomal protein mL53 family.

It localises to the mitochondrion. The polypeptide is Large ribosomal subunit protein mL53 (mrpl53) (Dictyostelium discoideum (Social amoeba)).